The following is a 609-amino-acid chain: Polyadenylate-binding protein 7 (609 aa).

RRM domains are found at residues 24–102 (ASLY…WSVR), 112–189 (GNVF…KFMK), 201–278 (TNLY…RAQK), and 304–381 (SNIY…IAQK). Residues 509 to 586 (EMKKSIQQRQ…AFEVLKSSKT (78 aa)) form the PABC domain.

It belongs to the polyadenylate-binding protein type-1 family. Expressed predominantly in siliques.

The protein resides in the cytoplasm. The protein localises to the nucleus. In terms of biological role, binds the poly(A) tail of mRNA. Appears to be an important mediator of the multiple roles of the poly(A) tail in mRNA biogenesis, stability and translation. This is Polyadenylate-binding protein 7 (PAB7) from Arabidopsis thaliana (Mouse-ear cress).